The primary structure comprises 347 residues: Globoside alpha-1,3-N-acetylgalactosaminyltransferase 1 (347 aa).

Topologically, residues 1 to 6 are cytoplasmic; the sequence is MTRPRL. The chain crosses the membrane as a helical; Signal-anchor for type II membrane protein span at residues 7–27; sequence AQGLAFFLLGGTGLWVLWKFI. The Lumenal portion of the chain corresponds to 28 to 347; the sequence is KDWLLVSYIP…VKKNANWLRT (320 aa). An N-linked (GlcNAc...) asparagine glycan is attached at asparagine 108. Substrate contacts are provided by residues 116–121, 206–208, and 228–231; these read FAVGKY, DVD, and HPGY. Residues aspartate 206 and aspartate 208 each contribute to the Mn(2+) site. Glutamate 298 acts as the Nucleophile in catalysis.

Belongs to the glycosyltransferase 6 family. Mn(2+) is required as a cofactor.

Its subcellular location is the golgi apparatus membrane. It catalyses the reaction a globoside Gb4Cer (d18:1(4E)) + UDP-N-acetyl-alpha-D-galactosamine = a globoside Forssman (d18:1(4E)) + UDP + H(+). The catalysed reaction is a globoside Gb4Cer + UDP-N-acetyl-alpha-D-galactosamine = a globoside IV3GalNAc-Gb4Cer + UDP + H(+). Its pathway is protein modification; protein glycosylation. Functionally, catalyzes the formation of Forssman glycolipid via the addition of N-acetylgalactosamine (GalNAc) in alpha-1,3-linkage to GalNAcb-1,3Gala-1,4Galb-1,4GlcCer (Gb4Cer). Forssman glycolipid (also called Forssman antigen; FG) probably serves for adherence of some pathogens. Conversely, it diminishes Shiga toxins susceptibility. The protein is Globoside alpha-1,3-N-acetylgalactosaminyltransferase 1 of Mus musculus (Mouse).